Here is a 507-residue protein sequence, read N- to C-terminus: Transcription factor CP2 (507 aa).

Residues 61 to 300 (ENKILPFQYV…SPGFNSSHNS (240 aa)) enclose the Grh/CP2 DB domain. The segment at 133 to 395 (EHQQLEGWRW…LFNALKGRMV (263 aa)) is DNA-binding. Disordered stretches follow at residues 240 to 268 (PKGADRKQKTDREKMEKRTPQEKEKYQPS) and 296 to 316 (SSHNSFPIGEGNGSPNHQPEP). The segment covering 241-265 (KGADRKQKTDREKMEKRTPQEKEKY) has biased composition (basic and acidic residues).

This sequence belongs to the grh/CP2 family. CP2 subfamily. Component of the SSP (stage selector protein) complex, which appears to be a heteromer of TFCP2 and 2 copies of NFE4.

Its subcellular location is the nucleus. Its function is as follows. May function as a transcription factor. The polypeptide is Transcription factor CP2 (tfcp2) (Xenopus tropicalis (Western clawed frog)).